The primary structure comprises 1194 residues: DNA polymerase catalytic subunit (1194 aa).

The protein belongs to the DNA polymerase type-B family. In terms of assembly, forms a complex with the ssDNA-binding protein, the DNA polymerase processivity factor, and the alkaline exonuclease. Interacts with the helicase-primase complex composed of the primase, the helicase and the primase-associated factor; this interaction may coordinate leading and lagging strand DNA synthesis at the replication fork.

Its subcellular location is the host nucleus. The catalysed reaction is DNA(n) + a 2'-deoxyribonucleoside 5'-triphosphate = DNA(n+1) + diphosphate. It carries out the reaction Endonucleolytic cleavage to 5'-phosphomonoester.. Functionally, replicates viral genomic DNA. The replication complex is composed of six viral proteins: the DNA polymerase, processivity factor, primase, primase-associated factor, helicase, and ssDNA-binding protein. Additionally, the polymerase contains an intrinsic ribonuclease H (RNase H) activity that specifically degrades RNA/DNA heteroduplexes or duplex DNA substrates in the 5' to 3' direction. Therefore, it can catalyze the excision of the RNA primers that initiate the synthesis of Okazaki fragments at a replication fork during viral DNA replication. The sequence is that of DNA polymerase catalytic subunit from Varicella-zoster virus (strain Oka vaccine) (HHV-3).